A 247-amino-acid chain; its full sequence is MQQGNTATLILLRHGESDWNARNLFTGWVDVGLTDKGRAEAVRSGELLAEHNLLPDVLYTSLLRRAITTAHLALDTADWLWIPVRRSWRLNERHYGALQGLDKAVTKARYGEERFMAWRRSYDTPPPPIEKGSEFSQDADPRYTDIGGGPLTECLADVVTRFLPYFTDVIVPDLRTGRTVLIVAHGNSLRALVKHLDEMSDDEVVGLNVPTGIPLRYDLDADLRPVVPGGTYLDPEAAAAVISQARP.

Residues 13–20 (RHGESDWN), 26–27 (TG), arginine 65, 92–95 (ERHY), lysine 103, 119–120 (RR), and 186–187 (GN) contribute to the substrate site. The Tele-phosphohistidine intermediate role is filled by histidine 14. Glutamate 92 acts as the Proton donor/acceptor in catalysis.

It belongs to the phosphoglycerate mutase family. BPG-dependent PGAM subfamily. Homotetramer, dimer of dimers.

The enzyme catalyses (2R)-2-phosphoglycerate = (2R)-3-phosphoglycerate. Its pathway is carbohydrate degradation; glycolysis; pyruvate from D-glyceraldehyde 3-phosphate: step 3/5. In terms of biological role, catalyzes the interconversion of 2-phosphoglycerate and 3-phosphoglycerate. In Mycobacterium leprae (strain Br4923), this protein is 2,3-bisphosphoglycerate-dependent phosphoglycerate mutase.